The sequence spans 122 residues: Small ribosomal subunit protein uS13 (122 aa).

A disordered region spans residues 99 to 122 (RGQRTHTNARTRKGPAKAIAGKKK).

It belongs to the universal ribosomal protein uS13 family. As to quaternary structure, part of the 30S ribosomal subunit. Forms a loose heterodimer with protein S19. Forms two bridges to the 50S subunit in the 70S ribosome.

In terms of biological role, located at the top of the head of the 30S subunit, it contacts several helices of the 16S rRNA. In the 70S ribosome it contacts the 23S rRNA (bridge B1a) and protein L5 of the 50S subunit (bridge B1b), connecting the 2 subunits; these bridges are implicated in subunit movement. Contacts the tRNAs in the A and P-sites. The sequence is that of Small ribosomal subunit protein uS13 from Rhizobium etli (strain ATCC 51251 / DSM 11541 / JCM 21823 / NBRC 15573 / CFN 42).